The chain runs to 1466 residues: Immediate-early protein 2 (1466 aa).

Disordered stretches follow at residues 1 to 21, 223 to 242, 339 to 370, 428 to 472, 517 to 965, 1005 to 1068, 1086 to 1179, and 1191 to 1223; these read MEPAKPSGNNMGSNDERMQDY, NRGYDYNFRHHSYRPRGGNG, YNHPTKAQTIPETTKTKKHKATKDNETSRGNQ, RCRS…VTKA, RSKT…TSIN, FRPH…CRSN, SRTR…SENA, and TTSHLHQKQNVKLHNTKKCKKKRPRDDDSDSSI. The segment covering 339–350 has biased composition (polar residues); that stretch reads YNHPTKAQTIPE. Basic residues predominate over residues 428–437; sequence RCRSVQKKKE. Composition is skewed to basic and acidic residues over residues 443–472 and 536–553; these read NKHDENHASSRSDLKERKSNEHEDKAVTKA and PTKDNSYKKHHDSKDNYP. Polar residues-rich tracts occupy residues 583–595 and 640–665; these read KNVSGKATSTSPK and KNHTASADKNLTDNSPIRSNLNPTAF. A compositionally biased stretch (low complexity) spans 666–681; it reads NKSNNNKSITNSTSNS. Residues 696 to 713 show a composition bias toward basic and acidic residues; that stretch reads NESKDPNRTCGKNSDKHL. 2 stretches are compositionally biased toward low complexity: residues 720 to 756 and 763 to 772; these read ASKRAPSRASSRTSSRASSRASSRASSRASSRASSRA and RASSRAPSRA. Residues 773 to 790 are compositionally biased toward basic and acidic residues; the sequence is SSRDSSRASSRDSSRDSN. Positions 791–800 are enriched in low complexity; it reads RASSKASSRA. Over residues 801–814 the composition is skewed to basic and acidic residues; it reads SSRDSSRASSRDSS. Low complexity-rich tracts occupy residues 826–884 and 926–940; these read SRAS…SSRA and SRASSRASSRASSRA. Over residues 955–965 the composition is skewed to polar residues; it reads RQTPPHDTSIN. Residues 989–1037 are interaction with human UBE2I; that stretch reads ARLQCFNHNDQFYNPRFRPHIRTNRKKSESTNDTDSESSMSRCKSHCRN. Low complexity-rich tracts occupy residues 1019 to 1029, 1053 to 1068, and 1086 to 1110; these read TNDTDSESSMS, GSSSISSSIEENCRSN, and SRTRSSSSSSSSSSASLSCSKSTLK. A compositionally biased stretch (basic and acidic residues) spans 1116 to 1131; the sequence is QNRDNKQIKSKSDSKH. The segment covering 1162-1177 has biased composition (polar residues); sequence HNSSPFNTHEQSNHSE. The span at 1195–1213 shows a compositional bias: basic residues; it reads LHQKQNVKLHNTKKCKKKR.

The protein belongs to the herpesviridae IE2 family. Interacts with human UBE2I in the nucleus. Although this interaction does not promote IE2 sumoylation, it represses transactivation activity.

It is found in the host nucleus. Functionally, transcriptional transactivator. The sequence is that of Immediate-early protein 2 (U90/U86) from Homo sapiens (Human).